The sequence spans 249 residues: Small ribosomal subunit protein uS2 (249 aa).

The protein belongs to the universal ribosomal protein uS2 family.

This is Small ribosomal subunit protein uS2 from Bordetella avium (strain 197N).